Here is a 483-residue protein sequence, read N- to C-terminus: Aspartyl/glutamyl-tRNA(Asn/Gln) amidotransferase subunit B (483 aa).

This sequence belongs to the GatB/GatE family. GatB subfamily. As to quaternary structure, heterotrimer of A, B and C subunits.

The catalysed reaction is L-glutamyl-tRNA(Gln) + L-glutamine + ATP + H2O = L-glutaminyl-tRNA(Gln) + L-glutamate + ADP + phosphate + H(+). The enzyme catalyses L-aspartyl-tRNA(Asn) + L-glutamine + ATP + H2O = L-asparaginyl-tRNA(Asn) + L-glutamate + ADP + phosphate + 2 H(+). Functionally, allows the formation of correctly charged Asn-tRNA(Asn) or Gln-tRNA(Gln) through the transamidation of misacylated Asp-tRNA(Asn) or Glu-tRNA(Gln) in organisms which lack either or both of asparaginyl-tRNA or glutaminyl-tRNA synthetases. The reaction takes place in the presence of glutamine and ATP through an activated phospho-Asp-tRNA(Asn) or phospho-Glu-tRNA(Gln). This chain is Aspartyl/glutamyl-tRNA(Asn/Gln) amidotransferase subunit B, found in Rickettsia rickettsii (strain Sheila Smith).